Reading from the N-terminus, the 102-residue chain is Large ribosomal subunit protein bL28 (102 aa).

A disordered region spans residues Met1–His20.

Belongs to the bacterial ribosomal protein bL28 family.

The chain is Large ribosomal subunit protein bL28 from Bradyrhizobium sp. (strain BTAi1 / ATCC BAA-1182).